The following is a 161-amino-acid chain: Large ribosomal subunit protein uL30m (161 aa).

A mitochondrion-targeting transit peptide spans 1 to 34 (MAGILRSIVQRPPGRLQTATKGVEPLVCVDWIRH).

It belongs to the universal ribosomal protein uL30 family. In terms of assembly, component of the mitochondrial ribosome large subunit (39S) which comprises a 16S rRNA and about 50 distinct proteins.

The protein localises to the mitochondrion. This chain is Large ribosomal subunit protein uL30m (MRPL30), found in Bos taurus (Bovine).